The following is a 268-amino-acid chain: Interferon alpha/beta receptor 2 (268 aa).

The first 16 residues, 1–16 (MGPWTLLLLHLPLVVS), serve as a signal peptide directing secretion. The Extracellular segment spans residues 17–223 (MLPAPTNVSI…TSPTAANTVP (207 aa)). Fibronectin type-III domains follow at residues 18-114 (LPAP…LTDT) and 115-217 (LLGP…TSPT). Intrachain disulfides connect C65–C74 and C191–C211. Residues 224-244 (VVLSVLCAFSLLVVLLCGIVV) form a helical membrane-spanning segment. The Cytoplasmic portion of the chain corresponds to 245-268 (YSGRLLCMHKPLPKTLSSVPLCGG).

Belongs to the type II cytokine receptor family. Heterodimer with IFNAR1; forming the receptor for type I interferon.

It localises to the cell membrane. It is found in the cytoplasm. Together with IFNAR1, forms the heterodimeric receptor for type I interferons (including interferons alpha, beta, epsilon, omega and kappa). Type I interferon binding activates the JAK-STAT signaling cascade, resulting in transcriptional activation or repression of interferon-regulated genes that encode the effectors of the interferon response. Mechanistically, type I interferon-binding brings the IFNAR1 and IFNAR2 subunits into close proximity with one another, driving their associated Janus kinases (JAKs) (TYK2 bound to IFNAR1 and JAK1 bound to IFNAR2) to cross-phosphorylate one another. The activated kinases phosphorylate specific tyrosine residues on the intracellular domains of IFNAR1 and IFNAR2, forming docking sites for the STAT transcription factors (STAT1, STAT2 and STAT). STAT proteins are then phosphorylated by the JAKs, promoting their translocation into the nucleus to regulate expression of interferon-regulated genes. The chain is Interferon alpha/beta receptor 2 from Oncorhynchus mykiss (Rainbow trout).